The chain runs to 638 residues: 1-deoxy-D-xylulose-5-phosphate synthase (638 aa).

Thiamine diphosphate-binding positions include His78 and 119–121; that span reads AHS. Mg(2+) is bound at residue Asp150. Thiamine diphosphate is bound by residues 151–152, Asn179, Tyr288, and Glu370; that span reads GS. Mg(2+) is bound at residue Asn179.

It belongs to the transketolase family. DXPS subfamily. In terms of assembly, homodimer. Mg(2+) is required as a cofactor. Thiamine diphosphate serves as cofactor.

The catalysed reaction is D-glyceraldehyde 3-phosphate + pyruvate + H(+) = 1-deoxy-D-xylulose 5-phosphate + CO2. Its pathway is metabolic intermediate biosynthesis; 1-deoxy-D-xylulose 5-phosphate biosynthesis; 1-deoxy-D-xylulose 5-phosphate from D-glyceraldehyde 3-phosphate and pyruvate: step 1/1. Catalyzes the acyloin condensation reaction between C atoms 2 and 3 of pyruvate and glyceraldehyde 3-phosphate to yield 1-deoxy-D-xylulose-5-phosphate (DXP). This Brucella anthropi (strain ATCC 49188 / DSM 6882 / CCUG 24695 / JCM 21032 / LMG 3331 / NBRC 15819 / NCTC 12168 / Alc 37) (Ochrobactrum anthropi) protein is 1-deoxy-D-xylulose-5-phosphate synthase.